The chain runs to 196 residues: Ribosome maturation factor RimP (196 aa).

The disordered stretch occupies residues 163-196 (GLAPSKPTGPAPKRPKPKTNSSSNEPAAKKPRAE).

It belongs to the RimP family.

Its subcellular location is the cytoplasm. Required for maturation of 30S ribosomal subunits. This Stenotrophomonas maltophilia (strain R551-3) protein is Ribosome maturation factor RimP.